The primary structure comprises 194 residues: Imidazoleglycerol-phosphate dehydratase (194 aa).

It belongs to the imidazoleglycerol-phosphate dehydratase family.

It localises to the cytoplasm. The catalysed reaction is D-erythro-1-(imidazol-4-yl)glycerol 3-phosphate = 3-(imidazol-4-yl)-2-oxopropyl phosphate + H2O. The protein operates within amino-acid biosynthesis; L-histidine biosynthesis; L-histidine from 5-phospho-alpha-D-ribose 1-diphosphate: step 6/9. The polypeptide is Imidazoleglycerol-phosphate dehydratase (Halalkalibacterium halodurans (strain ATCC BAA-125 / DSM 18197 / FERM 7344 / JCM 9153 / C-125) (Bacillus halodurans)).